Here is a 70-residue protein sequence, read N- to C-terminus: Frenatin 4.1 (70 aa).

A signal peptide spans 1 to 22 (MAFLKKSLFLVLFLGLVNLSIC). Positions 23-46 (EEEKREEENKEEEDENEALSEVKR) are excised as a propeptide. Lys68 carries the lysine amide modification.

Belongs to the frog skin active peptide (FSAP) family. Frenatin subfamily. As to expression, expressed by the skin glands.

The protein resides in the secreted. The protein localises to the target cell membrane. In terms of biological role, peptide with unknown function. Does not show antimicrobial activity against S.aureus (MIC&gt;512 ug/mL), E.coli (MIC&gt;512 ug/mL) and C.albicans (MIC&gt;512 ug/mL). Does not show hemolytic activity. Its function is as follows. Antimicrobial peptide with activity against E.coli (MIC=128 ug/mL or 54 uM) and C.albicans (MIC=256 ug/mL or 108 uM). Does not show activity against S.aureus (MIC&gt;512 ug/mL). Does not show hemolytic activity. The polypeptide is Frenatin 4.1 (Nyctimystes infrafrenatus (White-lipped tree frog)).